The chain runs to 436 residues: MLWMLARAVAFRRPGRGLAGGRGLWTGRPQSDCDSMKPLEGVRILDLTRVLAGPFATMNLGDLGAEVIKVERPGAGDDTRSWGPPFVNTESTYFLSVNRNKKSIAVNIKDPRGVRIVKELAAICDVFVENYVPGKLSEMGLGYEDIDKIAPHIIYCSITGYGQTGPMSHRAGYDAIASAMSGLMHITGPEDGDPVRPGVAMTDLATGLFAYGAIMAGLLQRYRTGKGLFIDCNLLSSQVACLTQVAANYLIGQKEAKRWGTAHGSIVPYQAFKTKDGYLVIGAGNNQQFAVVCKILNLPELIDDCKYRTNHLRVQNRKELVKILSARFAEEVTAKWLCLFEGSGIPYGPINSLKDVFSEAQVLHNGLVMEMNHPTVGKISVPGPAVRYSKFKMSEAKPPPLLGQHTRHILKEVLRYDEGAIEKLLCSGVIEQHETK.

A mitochondrion-targeting transit peptide spans 1–8 (MLWMLARA). Asp-203 serves as the catalytic Nucleophile. Residues Lys-392 and Lys-423 each carry the N6-acetyllysine modification.

This sequence belongs to the CoA-transferase III family.

It is found in the mitochondrion. It catalyses the reaction glutarate + succinyl-CoA = glutaryl-CoA + succinate. The catalysed reaction is 3-hydroxy-3-methylglutarate + succinyl-CoA = (3S)-3-hydroxy-3-methylglutaryl-CoA + succinate. It carries out the reaction 3-hydroxy-3-methylglutarate + glutaryl-CoA = (3S)-3-hydroxy-3-methylglutaryl-CoA + glutarate. The enzyme catalyses hexanedioate + glutaryl-CoA = hexanedioyl-CoA + glutarate. It catalyses the reaction itaconate + glutaryl-CoA = itaconyl-CoA + glutarate. The catalysed reaction is itaconate + succinyl-CoA = itaconyl-CoA + succinate. Its function is as follows. Coenzyme A (CoA) transferase that reversibly catalyzes the transfer of a CoA moiety from a dicarboxyl-CoA to a dicarboxylate in a metabolite recycling process. Displays preference for succinyl-CoA and glutarate-CoA as dicarboxyl-CoA donors and glutarate, succinate, adipate/hexanedioate, itaconate and 3-hydroxy-3-methylglutarate as dicarboxylate acceptors. Acts on intermediates or end products of lysine and tryptophan degradation pathway, in particular catalyzes succinyl-CoA-dependent reesterification of free glutarate into glutaryl-CoA to prevent renal excretion of glutarate. Upon inflammation, may convert macrophage-derived itaconate to itaconyl-CoA in erythroid precursors where it negatively regulates the TCA cycle and heme synthesis to limit erythroid differentiation in the context of stress erythropoiesis. The chain is Succinyl-CoA:glutarate CoA-transferase from Mus musculus (Mouse).